The chain runs to 75 residues: Ribonuclease pancreatic (75 aa).

2 cysteine pairs are disulfide-bonded: Cys-7–Cys-65 and Cys-46–Cys-53. N-linked (GlcNAc...) asparagine glycosylation is present at Asn-15. Residues 22–26 (KPVNT), Lys-47, and Arg-66 each bind substrate.

Belongs to the pancreatic ribonuclease family. As to quaternary structure, monomer. Interacts with and forms tight 1:1 complexes with RNH1. Dimerization of two such complexes may occur. Interaction with RNH1 inhibits this protein. As to expression, pancreas.

It is found in the secreted. The catalysed reaction is an [RNA] containing cytidine + H2O = an [RNA]-3'-cytidine-3'-phosphate + a 5'-hydroxy-ribonucleotide-3'-[RNA].. The enzyme catalyses an [RNA] containing uridine + H2O = an [RNA]-3'-uridine-3'-phosphate + a 5'-hydroxy-ribonucleotide-3'-[RNA].. In terms of biological role, endonuclease that catalyzes the cleavage of RNA on the 3' side of pyrimidine nucleotides. Acts on single-stranded and double-stranded RNA. This Oryx leucoryx (Arabian oryx) protein is Ribonuclease pancreatic (rnase1).